Here is a 637-residue protein sequence, read N- to C-terminus: Chaperone protein HtpG (637 aa).

The interval 1 to 345 (MSHQETHGFQ…SNDLPLNVSR (345 aa)) is a; substrate-binding. A b region spans residues 346 to 562 (EILQDNKVTR…EGEMSSQMIK (217 aa)). Positions 563-637 (LMQAAGQPVP…VNQMLLKSVG (75 aa)) are c.

This sequence belongs to the heat shock protein 90 family. As to quaternary structure, homodimer.

Its subcellular location is the cytoplasm. Molecular chaperone. Has ATPase activity. In Shewanella amazonensis (strain ATCC BAA-1098 / SB2B), this protein is Chaperone protein HtpG.